The chain runs to 544 residues: CTP synthase (544 aa).

The segment at 1–265 is amidoligase domain; the sequence is MARFIFITGG…DEAVLSAFGI (265 aa). Ser-13 provides a ligand contact to CTP. Position 13 (Ser-13) interacts with UTP. 14-19 is an ATP binding site; that stretch reads SLGKGL. L-glutamine is bound at residue Tyr-54. Asp-71 lines the ATP pocket. Residues Asp-71 and Glu-139 each coordinate Mg(2+). CTP-binding positions include 146–148, 186–191, and Lys-222; these read DIE and KTKPTQ. UTP contacts are provided by residues 186–191 and Lys-222; that span reads KTKPTQ. The Glutamine amidotransferase type-1 domain occupies 291 to 543; sequence TIGVVGKYVG…IAAALQQSRL (253 aa). Gly-355 contributes to the L-glutamine binding site. Cys-382 serves as the catalytic Nucleophile; for glutamine hydrolysis. L-glutamine contacts are provided by residues 383-386, Glu-406, and Arg-471; that span reads LGMQ. Residues His-516 and Glu-518 contribute to the active site.

Belongs to the CTP synthase family. Homotetramer.

It catalyses the reaction UTP + L-glutamine + ATP + H2O = CTP + L-glutamate + ADP + phosphate + 2 H(+). The enzyme catalyses L-glutamine + H2O = L-glutamate + NH4(+). The catalysed reaction is UTP + NH4(+) + ATP = CTP + ADP + phosphate + 2 H(+). The protein operates within pyrimidine metabolism; CTP biosynthesis via de novo pathway; CTP from UDP: step 2/2. With respect to regulation, allosterically activated by GTP, when glutamine is the substrate; GTP has no effect on the reaction when ammonia is the substrate. The allosteric effector GTP functions by stabilizing the protein conformation that binds the tetrahedral intermediate(s) formed during glutamine hydrolysis. Inhibited by the product CTP, via allosteric rather than competitive inhibition. Catalyzes the ATP-dependent amination of UTP to CTP with either L-glutamine or ammonia as the source of nitrogen. Regulates intracellular CTP levels through interactions with the four ribonucleotide triphosphates. This Rhizorhabdus wittichii (strain DSM 6014 / CCUG 31198 / JCM 15750 / NBRC 105917 / EY 4224 / RW1) (Sphingomonas wittichii) protein is CTP synthase.